Consider the following 411-residue polypeptide: Serine hydroxymethyltransferase (411 aa).

(6S)-5,6,7,8-tetrahydrofolate is bound by residues Leu-117 and 121 to 123 (GHL). Lys-226 bears the N6-(pyridoxal phosphate)lysine mark. (6S)-5,6,7,8-tetrahydrofolate is bound by residues Glu-241 and 349-351 (SPF).

This sequence belongs to the SHMT family. As to quaternary structure, homodimer. Requires pyridoxal 5'-phosphate as cofactor.

It is found in the cytoplasm. The enzyme catalyses (6R)-5,10-methylene-5,6,7,8-tetrahydrofolate + glycine + H2O = (6S)-5,6,7,8-tetrahydrofolate + L-serine. It participates in one-carbon metabolism; tetrahydrofolate interconversion. The protein operates within amino-acid biosynthesis; glycine biosynthesis; glycine from L-serine: step 1/1. Catalyzes the reversible interconversion of serine and glycine with tetrahydrofolate (THF) serving as the one-carbon carrier. This reaction serves as the major source of one-carbon groups required for the biosynthesis of purines, thymidylate, methionine, and other important biomolecules. Also exhibits THF-independent aldolase activity toward beta-hydroxyamino acids, producing glycine and aldehydes, via a retro-aldol mechanism. The polypeptide is Serine hydroxymethyltransferase (Macrococcus caseolyticus (strain JCSC5402) (Macrococcoides caseolyticum)).